The sequence spans 165 residues: 3-isopropylmalate dehydratase small subunit (165 aa).

Belongs to the LeuD family. LeuD type 2 subfamily. In terms of assembly, heterodimer of LeuC and LeuD.

The enzyme catalyses (2R,3S)-3-isopropylmalate = (2S)-2-isopropylmalate. Its pathway is amino-acid biosynthesis; L-leucine biosynthesis; L-leucine from 3-methyl-2-oxobutanoate: step 2/4. Catalyzes the isomerization between 2-isopropylmalate and 3-isopropylmalate, via the formation of 2-isopropylmaleate. The sequence is that of 3-isopropylmalate dehydratase small subunit from Desulfovibrio desulfuricans (strain ATCC 27774 / DSM 6949 / MB).